Consider the following 1276-residue polypeptide: Probable outer membrane protein pmp6 (1276 aa).

The signal sequence occupies residues 1–23 (MKYSLPWLLTSSALVFSLHPLMA). The Autotransporter domain occupies 981 to 1276 (DAPSHPGIWI…NANCGTRYSF (296 aa)).

This sequence belongs to the PMP outer membrane protein family.

The protein resides in the secreted. The protein localises to the cell wall. It is found in the cell outer membrane. In Chlamydia pneumoniae (Chlamydophila pneumoniae), this protein is Probable outer membrane protein pmp6 (pmp6).